Consider the following 253-residue polypeptide: Tryptophan synthase alpha chain (253 aa).

Residues glutamate 45 and aspartate 56 each act as proton acceptor in the active site.

This sequence belongs to the TrpA family. As to quaternary structure, tetramer of two alpha and two beta chains.

The enzyme catalyses (1S,2R)-1-C-(indol-3-yl)glycerol 3-phosphate + L-serine = D-glyceraldehyde 3-phosphate + L-tryptophan + H2O. Its pathway is amino-acid biosynthesis; L-tryptophan biosynthesis; L-tryptophan from chorismate: step 5/5. Its function is as follows. The alpha subunit is responsible for the aldol cleavage of indoleglycerol phosphate to indole and glyceraldehyde 3-phosphate. This chain is Tryptophan synthase alpha chain, found in Flavobacterium johnsoniae (strain ATCC 17061 / DSM 2064 / JCM 8514 / BCRC 14874 / CCUG 350202 / NBRC 14942 / NCIMB 11054 / UW101) (Cytophaga johnsonae).